The primary structure comprises 228 residues: Lipoprotein-releasing system ATP-binding protein LolD (228 aa).

Residues 7-227 (LQLSGIERHY…TIEDGKVVEL (221 aa)) enclose the ABC transporter domain. Position 43–50 (43–50 (APSGTGKS)) interacts with ATP.

This sequence belongs to the ABC transporter superfamily. Lipoprotein translocase (TC 3.A.1.125) family. In terms of assembly, the complex is composed of two ATP-binding proteins (LolD) and two transmembrane proteins (LolC and LolE).

Its subcellular location is the cell inner membrane. In terms of biological role, part of the ABC transporter complex LolCDE involved in the translocation of mature outer membrane-directed lipoproteins, from the inner membrane to the periplasmic chaperone, LolA. Responsible for the formation of the LolA-lipoprotein complex in an ATP-dependent manner. The polypeptide is Lipoprotein-releasing system ATP-binding protein LolD (Rhizobium meliloti (strain 1021) (Ensifer meliloti)).